Reading from the N-terminus, the 246-residue chain is tRNA (guanine-N(1)-)-methyltransferase (246 aa).

S-adenosyl-L-methionine contacts are provided by residues Gly-117 and 137–142; that span reads IGDYVL.

Belongs to the RNA methyltransferase TrmD family. As to quaternary structure, homodimer.

It is found in the cytoplasm. It catalyses the reaction guanosine(37) in tRNA + S-adenosyl-L-methionine = N(1)-methylguanosine(37) in tRNA + S-adenosyl-L-homocysteine + H(+). Its function is as follows. Specifically methylates guanosine-37 in various tRNAs. The protein is tRNA (guanine-N(1)-)-methyltransferase of Acinetobacter baumannii (strain AB307-0294).